Reading from the N-terminus, the 136-residue chain is Histone H3 (136 aa).

It belongs to the histone H3 family. In terms of assembly, the nucleosome is a histone octamer containing two molecules each of H2A, H2B, H3 and H4 assembled in one H3-H4 heterotetramer and two H2A-H2B heterodimers. The octamer wraps approximately 147 bp of DNA.

It localises to the nucleomorph. The protein resides in the chromosome. Core component of nucleosome. Nucleosomes wrap and compact DNA into chromatin, limiting DNA accessibility to the cellular machineries which require DNA as a template. Histones thereby play a central role in transcription regulation, DNA repair, DNA replication and chromosomal stability. DNA accessibility is regulated via a complex set of post-translational modifications of histones, also called histone code, and nucleosome remodeling. The protein is Histone H3 of Guillardia theta (Cryptophyte).